Here is a 296-residue protein sequence, read N- to C-terminus: Probable porphobilinogen deaminase (296 aa).

Cysteine 241 bears the S-(dipyrrolylmethanemethyl)cysteine mark.

The protein belongs to the HMBS family. The cofactor is dipyrromethane.

It catalyses the reaction 4 porphobilinogen + H2O = hydroxymethylbilane + 4 NH4(+). The protein operates within porphyrin-containing compound metabolism; protoporphyrin-IX biosynthesis; coproporphyrinogen-III from 5-aminolevulinate: step 2/4. Functionally, tetrapolymerization of the monopyrrole PBG into the hydroxymethylbilane pre-uroporphyrinogen in several discrete steps. In Pyrobaculum calidifontis (strain DSM 21063 / JCM 11548 / VA1), this protein is Probable porphobilinogen deaminase.